The primary structure comprises 516 residues: Cytochrome P450 1A1 (516 aa).

The mitochondrial targeting signal stretch occupies residues 25 to 36; that stretch reads FRPQVPKGLKSP. S63 carries an O-linked (GlcNAc) serine glycan. A substrate-binding site is contributed by F220. A heme-binding site is contributed by C453.

Belongs to the cytochrome P450 family. As to quaternary structure, interacts with cytosolic chaperones HSP70 and HSP90; this interaction is required for initial targeting to mitochondria. Interacts (via mitochondrial targeting signal) with TOMM40 (via N-terminus); this interaction is required for translocation across the mitochondrial outer membrane. Heme serves as cofactor. As to expression, constitutively expressed in liver.

It localises to the endoplasmic reticulum membrane. It is found in the mitochondrion inner membrane. The protein resides in the microsome membrane. The protein localises to the cytoplasm. The enzyme catalyses an organic molecule + reduced [NADPH--hemoprotein reductase] + O2 = an alcohol + oxidized [NADPH--hemoprotein reductase] + H2O + H(+). It carries out the reaction estrone + reduced [NADPH--hemoprotein reductase] + O2 = 2-hydroxyestrone + oxidized [NADPH--hemoprotein reductase] + H2O + H(+). It catalyses the reaction estrone + reduced [NADPH--hemoprotein reductase] + O2 = 4-hydroxyestrone + oxidized [NADPH--hemoprotein reductase] + H2O + H(+). The catalysed reaction is estrone + reduced [NADPH--hemoprotein reductase] + O2 = 6alpha-hydroxyestrone + oxidized [NADPH--hemoprotein reductase] + H2O + H(+). The enzyme catalyses estrone + reduced [NADPH--hemoprotein reductase] + O2 = 15alpha-hydroxyestrone + oxidized [NADPH--hemoprotein reductase] + H2O + H(+). It carries out the reaction estrone + reduced [NADPH--hemoprotein reductase] + O2 = 16alpha-hydroxyestrone + oxidized [NADPH--hemoprotein reductase] + H2O + H(+). It catalyses the reaction 17beta-estradiol + reduced [NADPH--hemoprotein reductase] + O2 = 2-hydroxy-17beta-estradiol + oxidized [NADPH--hemoprotein reductase] + H2O + H(+). The catalysed reaction is 17beta-estradiol + reduced [NADPH--hemoprotein reductase] + O2 = 4-hydroxy-17beta-estradiol + oxidized [NADPH--hemoprotein reductase] + H2O + H(+). The enzyme catalyses 17beta-estradiol + reduced [NADPH--hemoprotein reductase] + O2 = 6alpha-hydroxy-17beta-estradiol + oxidized [NADPH--hemoprotein reductase] + H2O + H(+). It carries out the reaction 17beta-estradiol + reduced [NADPH--hemoprotein reductase] + O2 = 7alpha-hydroxy-17beta-estradiol + oxidized [NADPH--hemoprotein reductase] + H2O + H(+). It catalyses the reaction 17beta-estradiol + reduced [NADPH--hemoprotein reductase] + O2 = 15alpha-hydroxy-17beta-estradiol + oxidized [NADPH--hemoprotein reductase] + H2O + H(+). The catalysed reaction is (5Z,8Z,11Z)-eicosatrienoate + reduced [NADPH--hemoprotein reductase] + O2 = 19-hydroxy-(5Z,8Z,11Z)-eicosatrienoate + oxidized [NADPH--hemoprotein reductase] + H2O + H(+). The enzyme catalyses (5Z,8Z,11Z,14Z)-eicosatetraenoate + reduced [NADPH--hemoprotein reductase] + O2 = 16-hydroxy-(5Z,8Z,11Z,14Z)-eicosatetraenoate + oxidized [NADPH--hemoprotein reductase] + H2O + H(+). It carries out the reaction (5Z,8Z,11Z,14Z)-eicosatetraenoate + reduced [NADPH--hemoprotein reductase] + O2 = 17-hydroxy-(5Z,8Z,11Z,14Z)-eicosatetraenoate + oxidized [NADPH--hemoprotein reductase] + H2O + H(+). It catalyses the reaction (5Z,8Z,11Z,14Z)-eicosatetraenoate + reduced [NADPH--hemoprotein reductase] + O2 = 18-hydroxy-(5Z,8Z,11Z,14Z)-eicosatetraenoate + oxidized [NADPH--hemoprotein reductase] + H2O + H(+). The catalysed reaction is (5Z,8Z,11Z,14Z)-eicosatetraenoate + reduced [NADPH--hemoprotein reductase] + O2 = 19-hydroxy-(5Z,8Z,11Z,14Z)-eicosatetraenoate + oxidized [NADPH--hemoprotein reductase] + H2O + H(+). The enzyme catalyses (5Z,8Z,11Z,14Z,17Z)-eicosapentaenoate + reduced [NADPH--hemoprotein reductase] + O2 = 19-hydroxy-(5Z,8Z,11Z,14Z,17Z)-eicosapentaenoate + oxidized [NADPH--hemoprotein reductase] + H2O + H(+). It carries out the reaction (5Z,8Z,11Z,14Z)-eicosatetraenoate + reduced [NADPH--hemoprotein reductase] + O2 = (8R,9S)-epoxy-(5Z,11Z,14Z)-eicosatrienoate + oxidized [NADPH--hemoprotein reductase] + H2O + H(+). It catalyses the reaction (5Z,8Z,11Z,14Z)-eicosatetraenoate + reduced [NADPH--hemoprotein reductase] + O2 = (11R,12S)-epoxy-(5Z,8Z,14Z)-eicosatrienoate + oxidized [NADPH--hemoprotein reductase] + H2O + H(+). The catalysed reaction is (5Z,8Z,11Z,14Z)-eicosatetraenoate + reduced [NADPH--hemoprotein reductase] + O2 = (14S,15R)-epoxy-(5Z,8Z,11Z)-eicosatrienoate + oxidized [NADPH--hemoprotein reductase] + H2O + H(+). The enzyme catalyses (5Z,8Z,11Z,14Z)-eicosatetraenoate + reduced [NADPH--hemoprotein reductase] + O2 = (14R,15S)-epoxy-(5Z,8Z,11Z)-eicosatrienoate + oxidized [NADPH--hemoprotein reductase] + H2O + H(+). It carries out the reaction (5Z,8Z,11Z,14Z,17Z)-eicosapentaenoate + reduced [NADPH--hemoprotein reductase] + O2 = (17R,18S)-epoxy-(5Z,8Z,11Z,14Z)-eicosatetraenoate + oxidized [NADPH--hemoprotein reductase] + H2O + H(+). It catalyses the reaction (4Z,7Z,10Z,13Z,16Z,19Z)-docosahexaenoate + reduced [NADPH--hemoprotein reductase] + O2 = (19S,20R)-epoxy-(4Z,7Z,10Z,13Z,16Z)-docosapentaenoate + oxidized [NADPH--hemoprotein reductase] + H2O + H(+). The catalysed reaction is (4Z,7Z,10Z,13Z,16Z,19Z)-docosahexaenoate + reduced [NADPH--hemoprotein reductase] + O2 = (19R,20S)-epoxy-(4Z,7Z,10Z,13Z,16Z)-docosapentaenoate + oxidized [NADPH--hemoprotein reductase] + H2O + H(+). The enzyme catalyses all-trans-retinol + reduced [NADPH--hemoprotein reductase] + O2 = all-trans-retinal + oxidized [NADPH--hemoprotein reductase] + 2 H2O + H(+). It carries out the reaction all-trans-retinal + reduced [NADPH--hemoprotein reductase] + O2 = all-trans-retinoate + oxidized [NADPH--hemoprotein reductase] + H2O + 2 H(+). It catalyses the reaction (13S)-hydroperoxy-(9Z,11E)-octadecadienoate = 13-oxo-(9Z,11E)-octadecadienoate + H2O. The catalysed reaction is (12S)-hydroperoxy-(5Z,8Z,10E,14Z)-eicosatetraenoate = 12-oxo-(5Z,8Z,10E,14Z)-eicosatetraenoate + H2O. The enzyme catalyses (15S)-hydroperoxy-(5Z,8Z,11Z,13E)-eicosatetraenoate = 15-oxo-(5Z,8Z,11Z,13E)-eicosatetraenoate + H2O. It carries out the reaction (5S)-hydroperoxy-(6E,8Z,11Z,14Z)-eicosatetraenoate = 5-oxo-(6E,8Z,11Z,14Z)-eicosatetraenoate + H2O. It functions in the pathway steroid hormone biosynthesis. Its pathway is lipid metabolism; fatty acid metabolism. It participates in cofactor metabolism; retinol metabolism. In terms of biological role, a cytochrome P450 monooxygenase involved in the metabolism of various endogenous substrates, including fatty acids, steroid hormones and vitamins. Mechanistically, uses molecular oxygen inserting one oxygen atom into a substrate, and reducing the second into a water molecule, with two electrons provided by NADPH via cytochrome P450 reductase (CPR; NADPH-ferrihemoprotein reductase). Catalyzes the hydroxylation of carbon-hydrogen bonds. Exhibits high catalytic activity for the formation of hydroxyestrogens from estrone (E1) and 17beta-estradiol (E2), namely 2-hydroxy E1 and E2, as well as D-ring hydroxylated E1 and E2 at the C15alpha and C16alpha positions. Displays different regioselectivities for polyunsaturated fatty acids (PUFA) hydroxylation. Catalyzes the epoxidation of double bonds of certain PUFA. Converts arachidonic acid toward epoxyeicosatrienoic acid (EET) regioisomers, 8,9-, 11,12-, and 14,15-EET, that function as lipid mediators in the vascular system. Displays an absolute stereoselectivity in the epoxidation of eicosapentaenoic acid (EPA) producing the 17(R),18(S) enantiomer. May play an important role in all-trans retinoic acid biosynthesis in extrahepatic tissues. Catalyzes two successive oxidative transformation of all-trans retinol to all-trans retinal and then to the active form all-trans retinoic acid. May also participate in eicosanoids metabolism by converting hydroperoxide species into oxo metabolites (lipoxygenase-like reaction, NADPH-independent). In Cavia porcellus (Guinea pig), this protein is Cytochrome P450 1A1 (CYP1A1).